The primary structure comprises 1058 residues: Carbamoyl phosphate synthase large chain (1058 aa).

A carboxyphosphate synthetic domain region spans residues methionine 1–glutamate 401. ATP contacts are provided by arginine 129, arginine 169, glycine 175, glycine 176, arginine 208, isoleucine 210, glutamate 215, glycine 241, isoleucine 242, histidine 243, glutamine 284, and glutamate 298. In terms of domain architecture, ATP-grasp 1 spans lysine 133–valine 327. Mg(2+)-binding residues include glutamine 284, glutamate 298, and asparagine 300. Glutamine 284, glutamate 298, and asparagine 300 together coordinate Mn(2+). An oligomerization domain region spans residues isoleucine 402–serine 546. Positions isoleucine 547–tyrosine 929 are carbamoyl phosphate synthetic domain. In terms of domain architecture, ATP-grasp 2 spans glutamate 671 to leucine 861. Arginine 707, serine 746, isoleucine 748, glutamate 752, glycine 777, valine 778, histidine 779, serine 780, glutamine 820, and glutamate 832 together coordinate ATP. Glutamine 820, glutamate 832, and asparagine 834 together coordinate Mg(2+). Mn(2+) is bound by residues glutamine 820, glutamate 832, and asparagine 834. In terms of domain architecture, MGS-like spans leucine 930–isoleucine 1058. An allosteric domain region spans residues leucine 930–isoleucine 1058.

It belongs to the CarB family. As to quaternary structure, composed of two chains; the small (or glutamine) chain promotes the hydrolysis of glutamine to ammonia, which is used by the large (or ammonia) chain to synthesize carbamoyl phosphate. Tetramer of heterodimers (alpha,beta)4. Requires Mg(2+) as cofactor. It depends on Mn(2+) as a cofactor.

It catalyses the reaction hydrogencarbonate + L-glutamine + 2 ATP + H2O = carbamoyl phosphate + L-glutamate + 2 ADP + phosphate + 2 H(+). It carries out the reaction hydrogencarbonate + NH4(+) + 2 ATP = carbamoyl phosphate + 2 ADP + phosphate + 2 H(+). The protein operates within amino-acid biosynthesis; L-arginine biosynthesis; carbamoyl phosphate from bicarbonate: step 1/1. It functions in the pathway pyrimidine metabolism; UMP biosynthesis via de novo pathway; (S)-dihydroorotate from bicarbonate: step 1/3. Its function is as follows. Large subunit of the glutamine-dependent carbamoyl phosphate synthetase (CPSase). CPSase catalyzes the formation of carbamoyl phosphate from the ammonia moiety of glutamine, carbonate, and phosphate donated by ATP, constituting the first step of 2 biosynthetic pathways, one leading to arginine and/or urea and the other to pyrimidine nucleotides. The large subunit (synthetase) binds the substrates ammonia (free or transferred from glutamine from the small subunit), hydrogencarbonate and ATP and carries out an ATP-coupled ligase reaction, activating hydrogencarbonate by forming carboxy phosphate which reacts with ammonia to form carbamoyl phosphate. The chain is Carbamoyl phosphate synthase large chain from Streptococcus pneumoniae (strain 70585).